A 399-amino-acid chain; its full sequence is Adenylate cyclase (399 aa).

The span at 1 to 10 shows a compositional bias: polar residues; sequence MTVGDTTSGS. Residues 1–35 form a disordered region; sequence MTVGDTTSGSGEEPAADSSVHATPHHEVDHTVEPT. Residues 24-33 show a composition bias toward basic and acidic residues; sequence PHHEVDHTVE. The Guanylate cyclase domain maps to 198-307; the sequence is RVRFADLVGF…TTVNLASRLT (110 aa). Mg(2+) is bound by residues Asp-203 and Asp-247.

It belongs to the adenylyl cyclase class-3 family. The cofactor is Mg(2+).

It carries out the reaction ATP = 3',5'-cyclic AMP + diphosphate. This Streptomyces griseus protein is Adenylate cyclase (cya).